Here is a 309-residue protein sequence, read N- to C-terminus: tRNA dimethylallyltransferase (309 aa).

Residue 10-17 participates in ATP binding; it reads GPTAVGKT. 12–17 contributes to the substrate binding site; sequence TAVGKT. The interval 35 to 38 is interaction with substrate tRNA; sequence DSMQ.

The protein belongs to the IPP transferase family. In terms of assembly, monomer. Requires Mg(2+) as cofactor.

It catalyses the reaction adenosine(37) in tRNA + dimethylallyl diphosphate = N(6)-dimethylallyladenosine(37) in tRNA + diphosphate. In terms of biological role, catalyzes the transfer of a dimethylallyl group onto the adenine at position 37 in tRNAs that read codons beginning with uridine, leading to the formation of N6-(dimethylallyl)adenosine (i(6)A). In Clostridium beijerinckii (strain ATCC 51743 / NCIMB 8052) (Clostridium acetobutylicum), this protein is tRNA dimethylallyltransferase.